The sequence spans 61 residues: Small ribosomal subunit protein uS14 (61 aa).

Zn(2+)-binding residues include Cys-24, Cys-27, Cys-40, and Cys-43.

The protein belongs to the universal ribosomal protein uS14 family. Zinc-binding uS14 subfamily. In terms of assembly, part of the 30S ribosomal subunit. Contacts proteins S3 and S10. Requires Zn(2+) as cofactor.

Binds 16S rRNA, required for the assembly of 30S particles and may also be responsible for determining the conformation of the 16S rRNA at the A site. The polypeptide is Small ribosomal subunit protein uS14 (Geotalea uraniireducens (strain Rf4) (Geobacter uraniireducens)).